We begin with the raw amino-acid sequence, 357 residues long: Peptide chain release factor 1 (357 aa).

Gln-236 is modified (N5-methylglutamine).

The protein belongs to the prokaryotic/mitochondrial release factor family. Methylated by PrmC. Methylation increases the termination efficiency of RF1.

It is found in the cytoplasm. Peptide chain release factor 1 directs the termination of translation in response to the peptide chain termination codons UAG and UAA. This Mycolicibacterium vanbaalenii (strain DSM 7251 / JCM 13017 / BCRC 16820 / KCTC 9966 / NRRL B-24157 / PYR-1) (Mycobacterium vanbaalenii) protein is Peptide chain release factor 1.